Consider the following 152-residue polypeptide: MKLLKVAAIAAIVFSGSALAGVVPQYGGGGGNHGGGGNNSGPNSELNIYQYGGGNSALALQADARNSDLTITQHGGGNGADVGQGSDDSSIDLTQRGFGNSATLDQWNGKDSHMTVKQFGGGNGAAVDQTASNSTVNVTQVGFGNNATAHQY.

The N-terminal stretch at 1-20 is a signal peptide; the sequence is MKLLKVAAIAAIVFSGSALA.

The protein belongs to the CsgA/CsgB family.

The protein localises to the fimbrium. Curlin is the structural subunit of the curli. Curli are coiled surface structures that assemble preferentially at growth temperatures below 37 degrees Celsius. Curli can bind to fibronectin. The protein is Major curlin subunit (csgA) of Escherichia coli O157:H7.